Consider the following 353-residue polypeptide: Photosystem II protein D1 (353 aa).

N-acetylthreonine is present on Thr2. At Thr2 the chain carries Phosphothreonine. 3 consecutive transmembrane segments (helical) span residues 29 to 46 (YIGWFGVLMIPTLLTATS), 118 to 133 (HFLLGVACYMGREWEL), and 142 to 156 (WIAVAYSAPVAAAAA). Chlorophyll a is bound at residue His118. Tyr126 is a pheophytin a binding site. Asp170 and Glu189 together coordinate [CaMn4O5] cluster. A helical membrane pass occupies residues 197 to 218 (FHMLGVAGVFGGSLFSAMHGSL). Chlorophyll a is bound at residue His198. A quinone-binding positions include His215 and 264-265 (SF). His215 contacts Fe cation. His272 is a binding site for Fe cation. A helical transmembrane segment spans residues 274–288 (FLAAWPVVGIWFTAL). [CaMn4O5] cluster-binding residues include His332, Glu333, Asp342, and Ala344. A propeptide spanning residues 345 to 353 (AVEAPSING) is cleaved from the precursor.

The protein belongs to the reaction center PufL/M/PsbA/D family. PSII is composed of 1 copy each of membrane proteins PsbA, PsbB, PsbC, PsbD, PsbE, PsbF, PsbH, PsbI, PsbJ, PsbK, PsbL, PsbM, PsbT, PsbX, PsbY, PsbZ, Psb30/Ycf12, at least 3 peripheral proteins of the oxygen-evolving complex and a large number of cofactors. It forms dimeric complexes. Requires The D1/D2 heterodimer binds P680, chlorophylls that are the primary electron donor of PSII, and subsequent electron acceptors. It shares a non-heme iron and each subunit binds pheophytin, quinone, additional chlorophylls, carotenoids and lipids. D1 provides most of the ligands for the Mn4-Ca-O5 cluster of the oxygen-evolving complex (OEC). There is also a Cl(-1) ion associated with D1 and D2, which is required for oxygen evolution. The PSII complex binds additional chlorophylls, carotenoids and specific lipids. as cofactor. Post-translationally, tyr-161 forms a radical intermediate that is referred to as redox-active TyrZ, YZ or Y-Z. In terms of processing, C-terminally processed by CTPA; processing is essential to allow assembly of the oxygen-evolving complex and thus photosynthetic growth.

It localises to the plastid. It is found in the chloroplast thylakoid membrane. It catalyses the reaction 2 a plastoquinone + 4 hnu + 2 H2O = 2 a plastoquinol + O2. In terms of biological role, photosystem II (PSII) is a light-driven water:plastoquinone oxidoreductase that uses light energy to abstract electrons from H(2)O, generating O(2) and a proton gradient subsequently used for ATP formation. It consists of a core antenna complex that captures photons, and an electron transfer chain that converts photonic excitation into a charge separation. The D1/D2 (PsbA/PsbD) reaction center heterodimer binds P680, the primary electron donor of PSII as well as several subsequent electron acceptors. The chain is Photosystem II protein D1 from Vitis vinifera (Grape).